A 769-amino-acid chain; its full sequence is Integrin beta-8 (769 aa).

The first 42 residues, 1–42 (MCGSALAFFTAAFVCLQNDRRGPASFLWAAWVFSLVLGLGQG), serve as a signal peptide directing secretion. Residues 43-684 (EDNRCASSNA…ECFSSPSYLR (642 aa)) are Extracellular-facing. The region spanning 46–95 (RCASSNAASCARCLALGPECGWCVQEDFISGGSRSERCDIVSNLISKGCS) is the PSI domain. Intrachain disulfides connect cysteine 47-cysteine 65, cysteine 55-cysteine 469, cysteine 58-cysteine 83, cysteine 68-cysteine 94, cysteine 211-cysteine 218, cysteine 266-cysteine 307, cysteine 407-cysteine 419, cysteine 439-cysteine 467, cysteine 471-cysteine 491, cysteine 471-cysteine 494, cysteine 481-cysteine 494, cysteine 499-cysteine 528, cysteine 511-cysteine 526, cysteine 520-cysteine 531, cysteine 533-cysteine 546, cysteine 553-cysteine 567, cysteine 561-cysteine 572, cysteine 574-cysteine 583, cysteine 585-cysteine 609, cysteine 593-cysteine 607, cysteine 601-cysteine 612, cysteine 614-cysteine 624, cysteine 627-cysteine 630, cysteine 634-cysteine 661, and cysteine 640-cysteine 657. Residues 146-384 (PVDLYYLVDV…NLVVEAYQKL (239 aa)) form the VWFA domain. The Mg(2+) site is built by aspartate 154 and serine 156. Position 193 (aspartate 193) interacts with Ca(2+). N-linked (GlcNAc...) asparagine glycosylation is present at asparagine 233. The Ca(2+) site is built by asparagine 249, aspartate 251, proline 253, and glutamate 254. Glutamate 254 is a binding site for Mg(2+). Asparagine 402 carries N-linked (GlcNAc...) asparagine glycosylation. N-linked (GlcNAc...) asparagine glycans are attached at residues asparagine 421, asparagine 431, asparagine 456, and asparagine 466. 4 I-EGF domains span residues 471–495 (CEDNRGPKGKCVDETFLDSKCFQCD), 499–547 (CHFD…KYCE), 548–584 (KDDFSCPYHHGNLCAGHGECEAGRCQCFSGWEGDRCQ), and 585–625 (CPSA…RFCE). N-linked (GlcNAc...) asparagine glycosylation is present at asparagine 648. A helical transmembrane segment spans residues 685–704 (IFFIIFIVTFLIGLLKVLII). The Cytoplasmic portion of the chain corresponds to 705 to 769 (RQVILQWNSN…NAHETFRCNF (65 aa)).

Belongs to the integrin beta chain family. In terms of assembly, heterodimer of an alpha and a beta subunit. Beta-8 (ITGB8) associates with alpha-V (ITGAV) to form ITGAV:ITGB8. ITGAV:ITGB8 interacts with TGFB1. In terms of tissue distribution, placenta, kidney, brain, ovary, uterus and in several transformed cells. Transiently expressed in 293 human embryonic kidney cells.

It localises to the cell membrane. Integrin alpha-V:beta-8 (ITGAV:ITGB8) is a receptor for fibronectin. It recognizes the sequence R-G-D in its ligands. Integrin alpha-V:beta-6 (ITGAV:ITGB6) mediates R-G-D-dependent release of transforming growth factor beta-1 (TGF-beta-1) from regulatory Latency-associated peptide (LAP), thereby playing a key role in TGF-beta-1 activation on the surface of activated regulatory T-cells (Tregs). Required during vasculogenesis. The sequence is that of Integrin beta-8 from Homo sapiens (Human).